The following is a 702-amino-acid chain: Polyribonucleotide nucleotidyltransferase (702 aa).

Mg(2+)-binding residues include Asp485 and Asp491. Residues 552–612 form the KH domain; it reads PRTEIICIDP…EGVKKAISII (61 aa). Residues 622 to 690 enclose the S1 motif domain; it reads GEIYLGKVTK…NQGRINLSRK (69 aa).

This sequence belongs to the polyribonucleotide nucleotidyltransferase family. The cofactor is Mg(2+).

The protein resides in the cytoplasm. It catalyses the reaction RNA(n+1) + phosphate = RNA(n) + a ribonucleoside 5'-diphosphate. Its function is as follows. Involved in mRNA degradation. Catalyzes the phosphorolysis of single-stranded polyribonucleotides processively in the 3'- to 5'-direction. This is Polyribonucleotide nucleotidyltransferase from Clostridium botulinum (strain 657 / Type Ba4).